The following is a 197-amino-acid chain: Small ribosomal subunit protein uS4B (197 aa).

In terms of domain architecture, S4 RNA-binding spans 88 to 150; it reads SRLDNMVYRM…SRKTEMFVNN (63 aa).

It belongs to the universal ribosomal protein uS4 family. Part of the 30S ribosomal subunit. Contacts protein S5. The interaction surface between S4 and S5 is involved in control of translational fidelity.

In terms of biological role, one of the primary rRNA binding proteins, it binds directly to 16S rRNA where it nucleates assembly of the body of the 30S subunit. Its function is as follows. With S5 and S12 plays an important role in translational accuracy. In Clostridium perfringens (strain SM101 / Type A), this protein is Small ribosomal subunit protein uS4B.